A 243-amino-acid chain; its full sequence is Carboxy-S-adenosyl-L-methionine synthase (243 aa).

S-adenosyl-L-methionine is bound by residues Tyr40, 65–67, 90–91, 118–119, Asn133, and Arg200; these read GCS, DN, and DI.

The protein belongs to the class I-like SAM-binding methyltransferase superfamily. Cx-SAM synthase family. Homodimer.

The catalysed reaction is prephenate + S-adenosyl-L-methionine = carboxy-S-adenosyl-L-methionine + 3-phenylpyruvate + H2O. Functionally, catalyzes the conversion of S-adenosyl-L-methionine (SAM) to carboxy-S-adenosyl-L-methionine (Cx-SAM). This chain is Carboxy-S-adenosyl-L-methionine synthase, found in Shewanella baltica (strain OS223).